Reading from the N-terminus, the 629-residue chain is DNA ligase B (629 aa).

K151 functions as the N6-AMP-lysine intermediate in the catalytic mechanism. The span at 588–597 shows a compositional bias: polar residues; sequence LQKQHGTNTR. Residues 588 to 629 form a disordered region; the sequence is LQKQHGTNTRNEQKGDVRRVDVKQDNGTTWLPEQDSNLRPND. Residues 598–611 show a composition bias toward basic and acidic residues; sequence NEQKGDVRRVDVKQ. The span at 612 to 629 shows a compositional bias: polar residues; it reads DNGTTWLPEQDSNLRPND.

This sequence belongs to the NAD-dependent DNA ligase family. LigB subfamily.

The enzyme catalyses NAD(+) + (deoxyribonucleotide)n-3'-hydroxyl + 5'-phospho-(deoxyribonucleotide)m = (deoxyribonucleotide)n+m + AMP + beta-nicotinamide D-nucleotide.. Functionally, catalyzes the formation of phosphodiester linkages between 5'-phosphoryl and 3'-hydroxyl groups in double-stranded DNA using NAD as a coenzyme and as the energy source for the reaction. The chain is DNA ligase B from Chromohalobacter salexigens (strain ATCC BAA-138 / DSM 3043 / CIP 106854 / NCIMB 13768 / 1H11).